We begin with the raw amino-acid sequence, 28 residues long: Ranatuerin-2SEb (28 aa).

Cys-23 and Cys-28 form a disulfide bridge.

As to expression, expressed by the skin glands.

The protein resides in the secreted. Its function is as follows. Mast cell degranulating peptide. Causes histamine release from rat peritoneal mast cells in vitro. Has antibacterial activity against the Gram-negative bacterium E.coli K12 and Gram-positive bacterium M.luteus NCT C2665. This is Ranatuerin-2SEb from Lithobates sevosus (Dusky gopher frog).